Here is a 1021-residue protein sequence, read N- to C-terminus: MGKRTNPRHFLVTWSLLLLETAFGLTSREVNKTLCIEKERDALLEFKRGLNDDFGRLSTWGDEEECCNWKGIECDKRTGHVIVLDLHSEVTCPGHACFAPILTGKVSPSLLELEYLNFLDLSVNGFENSEIPRFIGSLKRLEYLNLSSSDFSGEIPAQFQNLTSLRILDLGNNNLIVKDLVWLSHLSSLEFLRLGGNDFQARNWFREITKVPSLKELDLSVCGLSKFVPSPADVANSSLISLSVLHLCCNEFSTSSEYSWLFNFSTSLTSIDLSHNQLSRQIDDRFGSLMYLEHLNLANNFGAEGGVPSSFGNLTRLHYLDMSNTQTYQWLPELFLRLSGSRKSLEVLGLNDNSLFGSIVNVTRFSSLKKLYLQKNMLNGFFMERVGQVSSLEYLDLSDNQMRGPLPDLALFPSLRELHLGSNQFQGRIPQGIGKLSQLRIFDVSSNRLEGLPESMGQLSNLERFDASYNVLKGTITESHFSNLSSLVDLDLSFNLLSLNTRFDWVPPFQLQFIRLPSCNMGPSFPKWLQTQNNYTLLDISLANISDMLPSWFSNLPPELKILNLSNNHISGRVSEFIVSKQDYMIIDLSSNNFSGHLPLVPANIQIFYLHKNHFSGSISSICRNTIGAATSIDLSRNQFSGEVPDCWMNMSNLAVLNLAYNNFSGKVPQSLGSLTNLEALYIRQNSFRGMLPSFSQCQLLQILDIGGNKLTGRIPAWIGTDLLQLRILSLRSNKFDGSIPSLICQLQFLQILDLSENGLSGKIPQCLNNFTILRQENGSGESMDFKVRYDYIPGSYLYIGDLLIQWKNQESEYKNALLYLKIIDLSSNKLVGGIPKEIAEMRGLRSLNLSRNDLNGTVVEGIGQMKLLESLDLSRNQLSGMIPQGLSNLTFLSVLDLSNNHLSGRIPSSTQLQSFDRSSYSGNAQLCGPPLEECPGYAPPIDRGSNTNPQEHDDDDEFSSLEFYVSMVLGFFVTFWGILGCLIVNRSWRNAYFTFLTDMKSWLHMTSRVCFARLKGKLRN.

A signal peptide spans 1-24 (MGKRTNPRHFLVTWSLLLLETAFG). Residues 25 to 109 (LTSREVNKTL…PILTGKVSPS (85 aa)) form an N-cap region. Over 25–963 (LTSREVNKTL…DDDDEFSSLE (939 aa)) the chain is Extracellular. An N-linked (GlcNAc...) asparagine glycan is attached at Asn31. LRR repeat units lie at residues 113–136 (LEYLNFLDLSVNGFENSEIPRFIG), 138–161 (LKRLEYLNLSSSDFSGEIPAQFQN), 162–184 (LTSLRILDLGNNNLIVKDLVWLS), 186–211 (LSSLEFLRLGGNDFQARNWFREITKV), 214–237 (LKELDLSVCGLSKFVPSPADVANS), and 239–262 (LISLSVLHLCCNEFSTSSEYSWLF). Asn145 and Asn161 each carry an N-linked (GlcNAc...) asparagine glycan. The N-linked (GlcNAc...) asparagine glycan is linked to Asn236. Asn263 carries N-linked (GlcNAc...) asparagine glycosylation. LRR repeat units follow at residues 265–288 (STSLTSIDLSHNQLSRQIDDRFGS), 290–313 (MYLEHLNLANNFGAEGGVPSSFGN), 314–337 (LTRLHYLDMSNTQTYQWLPELFLR), 342–365 (RKSLEVLGLNDNSLFGSIVNVTRF), 366–388 (SSLKKLYLQKNMLNGFFMERVGQ), 389–412 (VSSLEYLDLSDNQMRGPLPDLALF), 413–436 (PSLRELHLGSNQFQGRIPQGIGKL), 437–459 (SQLRIFDVSSNRLEGLPESMGQL), 461–483 (NLERFDASYNVLKGTITESHFSN), 484–507 (LSSLVDLDLSFNLLSLNTRFDWVP), 509–532 (FQLQFIRLPSCNMGPSFPKWLQTQ), 533–555 (NNYTLLDISLANISDMLPSWFSN), 557–581 (PPELKILNLSNNHISGRVSEFIVSK), and 583–607 (DYMIIDLSSNNFSGHLPLVPANIQI). Asn313 carries N-linked (GlcNAc...) asparagine glycosylation. Residue Asn483 is glycosylated (N-linked (GlcNAc...) asparagine). Residues Asn534, Asn544, Asn564, and Asn593 are each glycosylated (N-linked (GlcNAc...) asparagine). Residues 608–626 (FYLHKNHFSGSISSICRNT) form an LRR 21; degenerate repeat. 6 LRR repeats span residues 627-651 (IGAATSIDLSRNQFSGEVPDCWMNM), 652-675 (SNLAVLNLAYNNFSGKVPQSLGSL), 677-698 (NLEALYIRQNSFRGMLPSFSQC), 699-722 (QLLQILDIGGNKLTGRIPAWIGTD), 723-747 (LLQLRILSLRSNKFDGSIPSLICQL), and 749-773 (FLQILDLSENGLSGKIPQCLNNFTI). Asn650 and Asn663 each carry an N-linked (GlcNAc...) asparagine glycan. 2 N-linked (GlcNAc...) asparagine glycosylation sites follow: Asn770 and Asn778. LRR repeat units lie at residues 818–842 (LLYLKIIDLSSNKLVGGIPKEIAEM), 843–866 (RGLRSLNLSRNDLNGTVVEGIGQM), 867–890 (KLLESLDLSRNQLSGMIPQGLSNL), and 892–913 (FLSVLDLSNNHLSGRIPSSTQL). 3 N-linked (GlcNAc...) asparagine glycosylation sites follow: Asn849, Asn856, and Asn889. The interval 914-963 (QSFDRSSYSGNAQLCGPPLEECPGYAPPIDRGSNTNPQEHDDDDEFSSLE) is C-cap/acidic domain. Residues 964 to 984 (FYVSMVLGFFVTFWGILGCLI) form a helical membrane-spanning segment. Over 985–1021 (VNRSWRNAYFTFLTDMKSWLHMTSRVCFARLKGKLRN) the chain is Cytoplasmic.

The protein belongs to the RLP family. Interacts with EIX elicitor protein.

Its subcellular location is the cell membrane. In terms of biological role, involved in plant defense. Confers resistance to the fungal pathogen T.viride through recognition of the EIX elicitor protein. In Solanum lycopersicum (Tomato), this protein is Receptor-like protein EIX2.